The primary structure comprises 374 residues: UDP-N-acetylglucosamine--N-acetylmuramyl-(pentapeptide) pyrophosphoryl-undecaprenol N-acetylglucosamine transferase (374 aa).

UDP-N-acetyl-alpha-D-glucosamine is bound by residues 14-16 (TGG), Asn125, Arg168, Ser196, and Gln297.

It belongs to the glycosyltransferase 28 family. MurG subfamily.

The protein localises to the cell inner membrane. The enzyme catalyses di-trans,octa-cis-undecaprenyl diphospho-N-acetyl-alpha-D-muramoyl-L-alanyl-D-glutamyl-meso-2,6-diaminopimeloyl-D-alanyl-D-alanine + UDP-N-acetyl-alpha-D-glucosamine = di-trans,octa-cis-undecaprenyl diphospho-[N-acetyl-alpha-D-glucosaminyl-(1-&gt;4)]-N-acetyl-alpha-D-muramoyl-L-alanyl-D-glutamyl-meso-2,6-diaminopimeloyl-D-alanyl-D-alanine + UDP + H(+). It participates in cell wall biogenesis; peptidoglycan biosynthesis. Its function is as follows. Cell wall formation. Catalyzes the transfer of a GlcNAc subunit on undecaprenyl-pyrophosphoryl-MurNAc-pentapeptide (lipid intermediate I) to form undecaprenyl-pyrophosphoryl-MurNAc-(pentapeptide)GlcNAc (lipid intermediate II). This Rhodopseudomonas palustris (strain BisA53) protein is UDP-N-acetylglucosamine--N-acetylmuramyl-(pentapeptide) pyrophosphoryl-undecaprenol N-acetylglucosamine transferase.